The following is a 547-amino-acid chain: Chaperonin GroEL (547 aa).

ATP-binding positions include 30-33 (TLGP), K51, 87-91 (DGTTT), G415, and D496.

It belongs to the chaperonin (HSP60) family. Forms a cylinder of 14 subunits composed of two heptameric rings stacked back-to-back. Interacts with the co-chaperonin GroES.

The protein resides in the cytoplasm. The enzyme catalyses ATP + H2O + a folded polypeptide = ADP + phosphate + an unfolded polypeptide.. Functionally, together with its co-chaperonin GroES, plays an essential role in assisting protein folding. The GroEL-GroES system forms a nano-cage that allows encapsulation of the non-native substrate proteins and provides a physical environment optimized to promote and accelerate protein folding. This Mannheimia succiniciproducens (strain KCTC 0769BP / MBEL55E) protein is Chaperonin GroEL.